The sequence spans 279 residues: uncharacterized protein (279 aa).

6 helical membrane-spanning segments follow: residues 29–49, 77–97, 105–125, 147–167, 186–206, and 240–260; these read PYNMIAGAIGAVVLTILALVF, VLYALAPLIPLVILVIGGTSL, WTKMGVPQAMLIGAIYGIIVT, VLGIIIAASVFVAGLKSTGAV, TIGPFLMGLITGSGDAAAIAF, and PIAGVTIVCAGLAMVSPVEMV.

It belongs to the DcuC/DcuD transporter (TC 2.A.61) family.

It localises to the cell membrane. This is an uncharacterized protein from Haemophilus influenzae (strain ATCC 51907 / DSM 11121 / KW20 / Rd).